We begin with the raw amino-acid sequence, 97 residues long: Protein MxiI (97 aa).

This sequence to S.typhimurium PrgJ.

Necessary for the secretion of IPA invasins. The chain is Protein MxiI (mxiI) from Shigella flexneri.